Here is a 683-residue protein sequence, read N- to C-terminus: MIDQYKHQQLQIGLVSPQQIKAWANKNLPNGEVVGEVTRPSTFHYKTDKPEKDGLFCERIFGPIKSGICACGNSRASGAENEDERFCQKCGVEFVDSRIRRYQMGYIKLACPVTHVWYLKGLPSYIANLLDKPLKKLEGLVYGDFSFARPSTKKPTFLRLRGLFEEEIASCNHSISPFFSTPGFATFRNREIATGAGAIREQLADLDLRIIIENSLVEWKELEDEGYSGDEWEDRKRRIRKVFLIRRMQLAKHFIQTNVEPEWMVLCLLPVLPPELRPIVYRSGDKVVTSDINELYKRVIRRNNNLAYLLKRSELAPADLVMCQEKLVQEAVDTLLDSGSRGQPTRDGHNKVYKSLSDVIEGKEGRFRETLLGKRVDYSGRSVIVVGPSLSLHQCGLPLEIAIKLFQLFVIRDLITKRATSNVRIAKRKIWEKEPIVWEILQEVMRGHPVLLNRAPTLHRLGIQAFQPTLVEGRTISLHPLVCKGFNADFDGDQMAVHLPLSLEAQAEARLLMFSHMNLLSPAIGDPICVPTQDMLIGLYVLTIGKRRGICANRYNSCRNYPNLKVNYNNNNNSKYRKDKEPHFSSSYDALGAYRQKLISLDSPLWLRWNLDQRVIGSREVPIEVQYESLGTYHEIYAHYLIMGNRKKEIRSIYIRTTLGHISFYREIEEAIQGFSQAYSYTT.

Cys69, Cys71, Cys87, and Cys90 together coordinate Zn(2+). Mg(2+)-binding residues include Asp489, Asp491, and Asp493.

This sequence belongs to the RNA polymerase beta' chain family. RpoC1 subfamily. In plastids the minimal PEP RNA polymerase catalytic core is composed of four subunits: alpha, beta, beta', and beta''. When a (nuclear-encoded) sigma factor is associated with the core the holoenzyme is formed, which can initiate transcription. The cofactor is Mg(2+). Requires Zn(2+) as cofactor.

The protein resides in the plastid. The protein localises to the chloroplast. It catalyses the reaction RNA(n) + a ribonucleoside 5'-triphosphate = RNA(n+1) + diphosphate. Its function is as follows. DNA-dependent RNA polymerase catalyzes the transcription of DNA into RNA using the four ribonucleoside triphosphates as substrates. The sequence is that of DNA-directed RNA polymerase subunit beta' from Triticum aestivum (Wheat).